We begin with the raw amino-acid sequence, 722 residues long: Mating-type switching protein swi2 (722 aa).

Disordered stretches follow at residues 1–35 (MNVN…GVGS) and 301–342 (SEEF…PLPS). The span at 9–22 (SIPVNTGSESISSN) shows a compositional bias: polar residues. Over residues 302-316 (EEFDFEPSREDEDFP) the composition is skewed to acidic residues. Residues 319-332 (TSDSTGQDPLSSEP) are compositionally biased toward polar residues.

As to quaternary structure, interacts with swi5 and rhp51.

In terms of biological role, required for normal mating-type switching. The sequence is that of Mating-type switching protein swi2 (swi2) from Schizosaccharomyces pombe (strain 972 / ATCC 24843) (Fission yeast).